The sequence spans 344 residues: Putative cyclin-Y-like protein 3 (344 aa).

A Cyclin N-terminal domain is found at 40–170; sequence ERYANRSLAI…FLELLEFNIH (131 aa).

This sequence belongs to the cyclin family. Cyclin Y subfamily.

This chain is Putative cyclin-Y-like protein 3 (CCNYL3), found in Homo sapiens (Human).